The following is a 209-amino-acid chain: Small ribosomal subunit protein uS4 (209 aa).

The S4 RNA-binding domain occupies 99-160 (ARLDSVAYRM…RARASLRCKA (62 aa)).

The protein belongs to the universal ribosomal protein uS4 family. Part of the 30S ribosomal subunit. Contacts protein S5. The interaction surface between S4 and S5 is involved in control of translational fidelity.

Its function is as follows. One of the primary rRNA binding proteins, it binds directly to 16S rRNA where it nucleates assembly of the body of the 30S subunit. In terms of biological role, with S5 and S12 plays an important role in translational accuracy. The sequence is that of Small ribosomal subunit protein uS4 from Dechloromonas aromatica (strain RCB).